The primary structure comprises 610 residues: UvrABC system protein C (610 aa).

Positions 16–94 constitute a GIY-YIG domain; that stretch reads SQPGVYRMYD…IKLYQPRYNV (79 aa). A UVR domain is found at 204 to 239; sequence QQVLTQLITRMEEASQQLHFEDAARIRDQIQAVRRV.

Belongs to the UvrC family. In terms of assembly, interacts with UvrB in an incision complex.

The protein resides in the cytoplasm. Functionally, the UvrABC repair system catalyzes the recognition and processing of DNA lesions. UvrC both incises the 5' and 3' sides of the lesion. The N-terminal half is responsible for the 3' incision and the C-terminal half is responsible for the 5' incision. The polypeptide is UvrABC system protein C (Yersinia pseudotuberculosis serotype O:1b (strain IP 31758)).